The following is a 286-amino-acid chain: MVAKILDGKQIAKDYRQGLQNQVEALKEKGFTPKLSVILVGNDGASQSYVRSKKKAAEKIGMISEIVHLEETATEEEVLNELNRLNNDDSVSGILVQVPLPKQVSEQKILEAINPDKDVDGFHPINIGKLYIDEQTFVPCTPLGIMEILKHADIDLEGKNAVVIGRSHIVGQPVSKLLLQKNASVTILHSRSKDMASYLKDADVIVSAVGKPGLVTKDVVKEGAVIIDVGNTPDENGKLKGDVDYDAVKEIAGAITPVPGGVGPLTITMVLNNTLLAEKMRRGIDS.

Residues 165–167 (GRS) and Ser-190 contribute to the NADP(+) site.

This sequence belongs to the tetrahydrofolate dehydrogenase/cyclohydrolase family. Homodimer.

The catalysed reaction is (6R)-5,10-methylene-5,6,7,8-tetrahydrofolate + NADP(+) = (6R)-5,10-methenyltetrahydrofolate + NADPH. The enzyme catalyses (6R)-5,10-methenyltetrahydrofolate + H2O = (6R)-10-formyltetrahydrofolate + H(+). It functions in the pathway one-carbon metabolism; tetrahydrofolate interconversion. Functionally, catalyzes the oxidation of 5,10-methylenetetrahydrofolate to 5,10-methenyltetrahydrofolate and then the hydrolysis of 5,10-methenyltetrahydrofolate to 10-formyltetrahydrofolate. The sequence is that of Bifunctional protein FolD from Staphylococcus aureus (strain MRSA252).